The following is a 630-amino-acid chain: 1-deoxy-D-xylulose-5-phosphate synthase (630 aa).

Thiamine diphosphate-binding positions include His-72 and 113–115 (GHS). Position 144 (Asp-144) interacts with Mg(2+). Residues 145–146 (GA), Asn-173, Tyr-284, and Glu-367 each bind thiamine diphosphate. Residue Asn-173 participates in Mg(2+) binding.

Belongs to the transketolase family. DXPS subfamily. As to quaternary structure, homodimer. Mg(2+) serves as cofactor. It depends on thiamine diphosphate as a cofactor.

The catalysed reaction is D-glyceraldehyde 3-phosphate + pyruvate + H(+) = 1-deoxy-D-xylulose 5-phosphate + CO2. It participates in metabolic intermediate biosynthesis; 1-deoxy-D-xylulose 5-phosphate biosynthesis; 1-deoxy-D-xylulose 5-phosphate from D-glyceraldehyde 3-phosphate and pyruvate: step 1/1. Its function is as follows. Catalyzes the acyloin condensation reaction between C atoms 2 and 3 of pyruvate and glyceraldehyde 3-phosphate to yield 1-deoxy-D-xylulose-5-phosphate (DXP). The protein is 1-deoxy-D-xylulose-5-phosphate synthase of Bacillus mycoides (strain KBAB4) (Bacillus weihenstephanensis).